A 1031-amino-acid polypeptide reads, in one-letter code: Semaphorin-6A (1031 aa).

The N-terminal stretch at 1–18 (MRPAALLLCLTLLHCAGA) is a signal peptide. Residues 19 to 649 (GFPEDSEPIS…KSNDQLVPVT (631 aa)) lie on the Extracellular side of the membrane. Residues 24–512 (SEPISISHGN…FSTCVIKVPL (489 aa)) form the Sema domain. Residues Asn-33, Asn-49, and Asn-65 are each glycosylated (N-linked (GlcNAc...) asparagine). 4 disulfides stabilise this stretch: Cys-107–Cys-117, Cys-135–Cys-144, Cys-258–Cys-369, and Cys-283–Cys-328. Asn-282 carries N-linked (GlcNAc...) asparagine glycosylation. N-linked (GlcNAc...) asparagine glycans are attached at residues Asn-434 and Asn-461. Disulfide bonds link Cys-477–Cys-506, Cys-515–Cys-533, Cys-521–Cys-568, and Cys-525–Cys-542. The chain crosses the membrane as a helical span at residues 650–670 (LLAIAVILAFVMGAVFSGIIV). At 671 to 1031 (YCVCDHRRKD…TSMKPNDACT (361 aa)) the chain is on the cytoplasmic side. Position 698 is a phosphoserine (Ser-698). 3 disordered regions span residues 754–777 (ALPT…SREW), 861–902 (SSKS…TGLS), and 914–1031 (GLEY…DACT). Over residues 921–931 (YPTNSLTRSHQ) the composition is skewed to polar residues. A compositionally biased stretch (low complexity) spans 932–951 (TTTLKRNNTNSSNSSHLSRN). Phosphoserine is present on Ser-953. Polar residues-rich tracts occupy residues 971-998 (QVHS…SLTR) and 1019-1031 (PLST…DACT).

Belongs to the semaphorin family. As to quaternary structure, active as a homodimer or oligomer. The SEMA6A homodimer interacts with a PLXNA2 homodimer, giving rise to a heterotetramer. Interacts with EVL. As to expression, particularly high levels in spinal cord, cerebellum, metencephalon, superior and inferior colliculus, diencephalon, olfactory bulb and eye.

The protein localises to the cell membrane. Functionally, cell surface receptor for PLXNA2 that plays an important role in cell-cell signaling. Required for normal granule cell migration in the developing cerebellum. Promotes reorganization of the actin cytoskeleton and plays an important role in axon guidance in the developing central nervous system. Can act as repulsive axon guidance cue. Has repulsive action towards migrating granular neurons. May play a role in channeling sympathetic axons into the sympathetic chains and controlling the temporal sequence of sympathetic target innervation. The polypeptide is Semaphorin-6A (Sema6a) (Mus musculus (Mouse)).